A 1622-amino-acid chain; its full sequence is MNFSEEEEYSNRNAASSQKLGSLFKDNNAMSGNQSLQYTNNKTQSSANSNSPDVLISFPIHLYKFDNNKNEYVSSGSIATAIVGYKSSGKYQLLAYDNNKNYIVTVNITAQFNYSVTTIYGSFTDGNGQNWSMTFNSAEESTKYATHVAIAKCASGGYQQITFVDINNQSKTKPVANGDRVSIKYAGWLENNQRVGSLFDSNLQSETPFRFVVGEGKVIKGWDLGVIGMRKSAKRILVIPSELAYGKKGHSTIPPNTNLIFDLEVTGSKKKEGSEPSLPSLNGQPSNAPQQSLPTQLFDNSPVPQDDKANLLQRVAKLGRATGFTSPPPSDSENESNSRNSHSNNSHNNNNNNNSNSNNNSNSNSNNNNNNNNQNNNNNNNNQNNNQNNNNNNNYNNNNNNNNGYNNNNNNNGYNNNNNYNNNMNNNNGFNNGMNNGFGNNSMNGMNNGFNNGMNGMNNGMNGGFGMNGNMYTSSQSPQFNPMGTFGSAYNQQQALIGSGALVPIMPQHQQPSIIVASPPPPVQQAPPPTPAPAPPPPTPVIVQAPPAPVQSTTETIQILVEEKQFKKEIKHSIDQFNSKLDQVSSKFDSLAQPIVKGDVPISGVLLVQTLHRLVEDNEKLIKENVEKENRMVTLKENIATLHKKNEQFLEENTKMMESRNEAITDNVAQMRRQIIDLQKQKTLVEDDLADKQMLHTKSQSVINQLKRDYNTLQEELNSAKEENQKSIQDQEALKQAEKDYALKIRAFKKSLLDEKNARKSDIEKINSLEDELKDAQDSLTQAEKSNEESLKRLKLDMVRIKKRNDDKVSQLTLEITTLKDTLETERSALSSVQTLVENTRLETESKFNLLLIKKEEAIAAAELSLSEEQSKYNKLVQSNNQQIDQLQKLIDDAKKKLDHEKEEVIKSYKKGFAEGIESTKQENDLITTLQQQIQQLTTQYDDTKKSLIETKEKLSTLESQPPKTIVKEVIVKVPSDGTTVAVASSNNVDVAKEVKVCMQKVFVQVSESFDEDEEYSTDSIMSTFKDVIKRVTVEYIQEQKEKQQQQQEKEEEEVVEEEEKEEEEKEEEEKEEEEKEEEKEEEKEQEEEEEEKEVVVEEIVTIAEEVKEEEVVVEEPVTVVEEVKEEKPTPAIEEPVVAKSQTVVDPLSTKDDEDDDDDEDDYDDINEEDLKNIDAEIEKMQQEMGDELEDDDDEEEEKEKETAPVVTKSEVVDPLSSTKEESEEEEEEETKVEVPVLEEEKEEEETKVEVPVLEDEQEDKVESDVEEKIVEPPTLDEDDFEKVEVPVLGDDEQDEKVVEEPAPEEEEETKVEVPVLNKDDDEDNEKDVASDSEETPSTPPPIDDVEEEEEKEEKVVEQVKEEINETKFESSPFAVDEPTTTEEKEEEKEEEKVEEEEEKVVEPPTIDDDETTAPVIPSIDNSPRQTTTEEEESSTTAATTSTTTTSSTPVKPDEADTTKKTPKKTSFFDFDDSPFSAETETETKSTAASSDPFADTTSSTPTSTKKKDFFSTDDDSLFGNSSDIFDKPSTTTKKDPFDTDSTDDLFGSIKTNKESTSTASSTSNGGLFDSDSLFGGISVAKSNNNTPSRQKQDFSSLFGSDPTISPLTETEPEEKEIVLPL.

The PPIase FKBP-type domain occupies 178–269 (GDRVSIKYAG…IFDLEVTGSK (92 aa)). The interval 268-306 (SKKKEGSEPSLPSLNGQPSNAPQQSLPTQLFDNSPVPQD) is disordered. Polar residues predominate over residues 277–303 (SLPSLNGQPSNAPQQSLPTQLFDNSPV). An Omega-N-methylarginine modification is found at Arg-314. Disordered stretches follow at residues 320 to 432 (RATG…GFNN) and 518 to 538 (SPPPPVQQAPPPTPAPAPPPP). Residues 335–432 (ESNSRNSHSN…NMNNNNGFNN (98 aa)) are compositionally biased toward low complexity. Coiled-coil stretches lie at residues 607 to 827 (LVQT…ETER) and 854 to 961 (KKEE…LESQ). Disordered stretches follow at residues 1043 to 1097 (KQQQ…EVVV) and 1122 to 1622 (EEVK…VLPL). Composition is skewed to acidic residues over residues 1050–1093 (KEEE…EEEK) and 1152–1168 (DDEDDDDDEDDYDDINE). Over residues 1169 to 1182 (EDLKNIDAEIEKMQ) the composition is skewed to basic and acidic residues. Composition is skewed to acidic residues over residues 1185–1199 (MGDELEDDDDEEEEK) and 1222–1260 (ESEEEEEEETKVEVPVLEEEKEEEETKVEVPVLEDEQED). Basic and acidic residues predominate over residues 1261-1271 (KVESDVEEKIV). Residues 1320 to 1335 (DDDEDNEKDVASDSEE) show a composition bias toward acidic residues. Basic and acidic residues predominate over residues 1353-1369 (EEKVVEQVKEEINETKF). Residues 1380 to 1412 (TTTEEKEEEKEEEKVEEEEEKVVEPPTIDDDET) are compositionally biased toward acidic residues. 2 stretches are compositionally biased toward low complexity: residues 1435 to 1449 (STTAATTSTTTTSST) and 1465 to 1504 (KTSFFDFDDSPFSAETETETKSTAASSDPFADTTSSTPTS). Polar residues-rich tracts occupy residues 1519 to 1532 (FGNSSDIFDKPSTT) and 1581 to 1609 (AKSNNNTPSRQKQDFSSLFGSDPTISPLT).

Belongs to the FKBP-type PPIase family.

It carries out the reaction [protein]-peptidylproline (omega=180) = [protein]-peptidylproline (omega=0). Inhibited by both FK506 and rapamycin. In terms of biological role, PPIases accelerate the folding of proteins by catalyzing the cis-trans isomerization of proline imidic peptide bonds in oligopeptides. The polypeptide is FK506-binding protein 5 (fkbp5) (Dictyostelium discoideum (Social amoeba)).